A 150-amino-acid polypeptide reads, in one-letter code: UPF0178 protein PputW619_5044 (150 aa).

This sequence belongs to the UPF0178 family.

The sequence is that of UPF0178 protein PputW619_5044 from Pseudomonas putida (strain W619).